We begin with the raw amino-acid sequence, 534 residues long: Unguisins hydrolase ungD' (534 aa).

It belongs to the peptidase S12 family.

The protein operates within secondary metabolite biosynthesis. In terms of biological role, hydrolase; part of the gene cluster that mediates the biosynthesis of the unguisins, gamma-aminobutyric acid (GABA)-containing fungal cyclic heptapeptides with the amino acid sequence cyclo-(D-Ala1-D-Val2-L-Leu3-beta-MePhe4-D-Ala5-D-Trp6-GABA7) for unguisin H and cyclo-(D-Ala1-D-Ala2-L-Leu3-beta-MePhe4-D-Ala5-D-Trp6-GABA7) for unguisin I. Within the pathway, the hydrolase ungD' catalyzes the hydrolysis between the D-tryptophan and GABA residues of unguisins H and I to produce the corresponding linear peptides. The alanine racemase ungC' catalyzes the interconversion of L-alanine and D-alanine, providing the D-alanine which is accepted by the first adenylation domain of the nonribosomal peptide synthetase (NRPS) ungA', whereas the methyltransferase ungE' provides the (2R,3R)-beta-methylphenylalanine residue incorporated by the module 4. UngA' is the main enzyme within the cluster which condenses the 7 residues using its respective 7 modules. The terminal condensation domain (Ct) is involved in cyclization with D-alanine and thereby releasing of unguisins H and I. The polypeptide is Unguisins hydrolase ungD' (Aspergillus campestris (strain IBT 28561)).